We begin with the raw amino-acid sequence, 879 residues long: Pyruvate dehydrogenase phosphatase regulatory subunit, mitochondrial (879 aa).

A mitochondrion-targeting transit peptide spans 1–27 (MMFYRLLSIVGRQRASPGWQNWSSARN).

This sequence belongs to the GcvT family. As to quaternary structure, heterodimer of a catalytic (PDP1) and a regulatory (PDPR) subunit.

It localises to the mitochondrion matrix. Its function is as follows. Decreases the sensitivity of PDP1 to magnesium ions, and this inhibition is reversed by the polyamine spermine. This chain is Pyruvate dehydrogenase phosphatase regulatory subunit, mitochondrial (PDPR), found in Homo sapiens (Human).